The primary structure comprises 485 residues: Glutamate--tRNA ligase (485 aa).

The 'HIGH' region motif lies at 11-21 (PSPTGHLHIGN). The 'KMSKS' region signature appears at 252-256 (KLSKR). K255 is an ATP binding site.

It belongs to the class-I aminoacyl-tRNA synthetase family. Glutamate--tRNA ligase type 1 subfamily. In terms of assembly, monomer.

The protein resides in the cytoplasm. The enzyme catalyses tRNA(Glu) + L-glutamate + ATP = L-glutamyl-tRNA(Glu) + AMP + diphosphate. Functionally, catalyzes the attachment of glutamate to tRNA(Glu) in a two-step reaction: glutamate is first activated by ATP to form Glu-AMP and then transferred to the acceptor end of tRNA(Glu). This is Glutamate--tRNA ligase from Bacillus cereus (strain ATCC 10987 / NRS 248).